A 196-amino-acid polypeptide reads, in one-letter code: Na(+)-translocating ferredoxin:NAD(+) oxidoreductase complex subunit E (196 aa).

5 helical membrane passes run 38–58, 68–88, 92–112, 127–147, and 169–189; these read MGMGLATMLVLIGSNVAISAL, IPAFVVVIASFVTIVGMLMKA, ALDAALGIFIPLIVVNCIILA, FADAVGMGLGFTLALTILGSI, and VLLMILPPGAFLTLGLLIGLI.

This sequence belongs to the NqrDE/RnfAE family. As to quaternary structure, the complex is composed of six subunits: RnfA, RnfB, RnfC, RnfD, RnfE and RnfG.

It localises to the cell membrane. The catalysed reaction is 2 reduced [2Fe-2S]-[ferredoxin] + Na(+)(in) + NAD(+) + H(+) = 2 oxidized [2Fe-2S]-[ferredoxin] + Na(+)(out) + NADH. Its function is as follows. Part of a membrane-bound complex that couples electron transfer with translocation of ions across the membrane. Couples electron transfer from reduced ferredoxin to NAD(+) with electrogenic movement of Na(+) out of the cell. Involved in caffeate respiration. This Acetobacterium woodii (strain ATCC 29683 / DSM 1030 / JCM 2381 / KCTC 1655 / WB1) protein is Na(+)-translocating ferredoxin:NAD(+) oxidoreductase complex subunit E.